The following is a 228-amino-acid chain: 3,4-dihydroxy-2-butanone 4-phosphate synthase (228 aa).

Residues 37 to 38 (RE), D42, 150 to 154 (RRGHT), and E174 contribute to the D-ribulose 5-phosphate site. E38 provides a ligand contact to Mg(2+). H153 is a Mg(2+) binding site.

This sequence belongs to the DHBP synthase family. As to quaternary structure, homodimer. It depends on Mg(2+) as a cofactor. The cofactor is Mn(2+).

It carries out the reaction D-ribulose 5-phosphate = (2S)-2-hydroxy-3-oxobutyl phosphate + formate + H(+). Its pathway is cofactor biosynthesis; riboflavin biosynthesis; 2-hydroxy-3-oxobutyl phosphate from D-ribulose 5-phosphate: step 1/1. In terms of biological role, catalyzes the conversion of D-ribulose 5-phosphate to formate and 3,4-dihydroxy-2-butanone 4-phosphate. This chain is 3,4-dihydroxy-2-butanone 4-phosphate synthase, found in Photobacterium profundum (strain SS9).